Here is a 149-residue protein sequence, read N- to C-terminus: Large ribosomal subunit protein uL24 (149 aa).

The segment at 114-149 (RKIIERSGGTPEVEAVPEKSEEEKEEKEKEEEKSEE) is disordered. The span at 129-149 (VPEKSEEEKEEKEKEEEKSEE) shows a compositional bias: basic and acidic residues.

It belongs to the universal ribosomal protein uL24 family. In terms of assembly, part of the 50S ribosomal subunit.

Its function is as follows. One of two assembly initiator proteins, it binds directly to the 5'-end of the 23S rRNA, where it nucleates assembly of the 50S subunit. Functionally, located at the polypeptide exit tunnel on the outside of the subunit. This chain is Large ribosomal subunit protein uL24, found in Methanopyrus kandleri (strain AV19 / DSM 6324 / JCM 9639 / NBRC 100938).